The primary structure comprises 365 residues: Zinc finger TRAF-type-containing protein 1-A (365 aa).

Positions 1–56 (MSEEREAPGPLASSSAGLGAEVGQEEVPGGAGPARLLLLPSDSDGPPKKRLRSEAE) are disordered. Residues 72–117 (CTVCLDLPKASVYQCTNGHLMCAGCFIHLLADSRLKEEQATCPNCR) form an RING-type; degenerate zinc finger. The TRAF-type zinc-finger motif lies at 113–186 (CPNCRCEISK…PWEGPYHELT (74 aa)).

This sequence belongs to the ZFTRAF1 family.

Its subcellular location is the cytoplasm. The polypeptide is Zinc finger TRAF-type-containing protein 1-A (Xenopus laevis (African clawed frog)).